We begin with the raw amino-acid sequence, 254 residues long: Geranylgeranylglyceryl phosphate synthase (254 aa).

Mg(2+) contacts are provided by Asp28 and Ser53. Residues 172–178 (YLEAGSG), 203–204 (GG), and 225–226 (GT) contribute to the sn-glycerol 1-phosphate site.

It belongs to the GGGP/HepGP synthase family. Group II subfamily. Mg(2+) serves as cofactor.

It is found in the cytoplasm. The catalysed reaction is sn-glycerol 1-phosphate + (2E,6E,10E)-geranylgeranyl diphosphate = sn-3-O-(geranylgeranyl)glycerol 1-phosphate + diphosphate. The protein operates within membrane lipid metabolism; glycerophospholipid metabolism. Functionally, prenyltransferase that catalyzes the transfer of the geranylgeranyl moiety of geranylgeranyl diphosphate (GGPP) to the C3 hydroxyl of sn-glycerol-1-phosphate (G1P). This reaction is the first ether-bond-formation step in the biosynthesis of archaeal membrane lipids. The protein is Geranylgeranylglyceryl phosphate synthase of Methanococcus vannielii (strain ATCC 35089 / DSM 1224 / JCM 13029 / OCM 148 / SB).